Here is a 307-residue protein sequence, read N- to C-terminus: Ubiquitin recognition factor in ER-associated degradation protein 1 (307 aa).

Met-1 is subject to N-acetylmethionine. Ser-129, Ser-231, Ser-245, Ser-247, and Ser-299 each carry phosphoserine. Disordered regions lie at residues 230–255 and 282–307; these read GSGNRLDGKKKGVEPSPSPIKPGDIK and EEDEAGGRFVAFSGEGQSLRKKGRKP.

The protein belongs to the UFD1 family. In terms of assembly, interacts with USP13. Heterodimer with NPLOC4, this heterodimer binds VCP and inhibits Golgi membrane fusion. Interacts with ZFAND2B; probably through VCP.

Its subcellular location is the nucleus. The protein localises to the cytoplasm. It is found in the cytosol. It functions in the pathway protein degradation; proteasomal ubiquitin-dependent pathway. In terms of biological role, essential component of the ubiquitin-dependent proteolytic pathway which degrades ubiquitin fusion proteins. The ternary complex containing UFD1, VCP and NPLOC4 binds ubiquitinated proteins and is necessary for the export of misfolded proteins from the ER to the cytoplasm, where they are degraded by the proteasome. The NPLOC4-UFD1-VCP complex regulates spindle disassembly at the end of mitosis and is necessary for the formation of a closed nuclear envelope. It may be involved in the development of some ectoderm-derived structures. Acts as a negative regulator of type I interferon production via the complex formed with VCP and NPLOC4, which binds to RIGI and recruits RNF125 to promote ubiquitination and degradation of RIGI. The chain is Ubiquitin recognition factor in ER-associated degradation protein 1 from Rattus norvegicus (Rat).